A 35-amino-acid chain; its full sequence is Neurotoxin (35 aa).

3 disulfides stabilise this stretch: cysteine 7–cysteine 27, cysteine 14–cysteine 32, and cysteine 18–cysteine 34.

As to expression, expressed by the venom gland.

The protein resides in the secreted. Its function is as follows. Neurotoxin. Decreases the action potential of myelinated nerves in mice and frogs. This Buthus sp. (strain IY-2001) (Scorpion) protein is Neurotoxin.